The sequence spans 427 residues: Male abnormal protein mab-31 (427 aa).

Residues 68-102 (PIGTGRFPNPSPPRSSSGTNTPIRKTPGSRPDRGK) are disordered.

It localises to the nucleus. Putative transcription factor. Acts in a TGF-beta-like pathway during development of male-specific genital sensilla (simple sense organs), known as rays. Involved in production of reactive oxygen species (ROS), acting downstream of the TGF-beta-like dbl-1 signaling pathway. Involved in locomotory behavior. In Caenorhabditis elegans, this protein is Male abnormal protein mab-31.